A 179-amino-acid polypeptide reads, in one-letter code: Large ribosomal subunit protein uL5 (179 aa).

This sequence belongs to the universal ribosomal protein uL5 family. As to quaternary structure, part of the 50S ribosomal subunit; part of the 5S rRNA/L5/L18/L25 subcomplex. Contacts the 5S rRNA and the P site tRNA. Forms a bridge to the 30S subunit in the 70S ribosome.

In terms of biological role, this is one of the proteins that bind and probably mediate the attachment of the 5S RNA into the large ribosomal subunit, where it forms part of the central protuberance. In the 70S ribosome it contacts protein S13 of the 30S subunit (bridge B1b), connecting the 2 subunits; this bridge is implicated in subunit movement. Contacts the P site tRNA; the 5S rRNA and some of its associated proteins might help stabilize positioning of ribosome-bound tRNAs. The chain is Large ribosomal subunit protein uL5 from Staphylococcus aureus (strain MW2).